The following is a 326-amino-acid chain: Biotin synthase (326 aa).

In terms of domain architecture, Radical SAM core spans 50-279 (FNGEKVDVEQ…ESVIKISGGR (230 aa)). Cysteine 68, cysteine 72, and cysteine 75 together coordinate [4Fe-4S] cluster. [2Fe-2S] cluster-binding residues include cysteine 112, cysteine 145, cysteine 204, and lysine 274.

The protein belongs to the radical SAM superfamily. Biotin synthase family. As to quaternary structure, homodimer. [4Fe-4S] cluster is required as a cofactor. [2Fe-2S] cluster serves as cofactor.

The catalysed reaction is (4R,5S)-dethiobiotin + (sulfur carrier)-SH + 2 reduced [2Fe-2S]-[ferredoxin] + 2 S-adenosyl-L-methionine = (sulfur carrier)-H + biotin + 2 5'-deoxyadenosine + 2 L-methionine + 2 oxidized [2Fe-2S]-[ferredoxin]. Its pathway is cofactor biosynthesis; biotin biosynthesis; biotin from 7,8-diaminononanoate: step 2/2. Catalyzes the conversion of dethiobiotin (DTB) to biotin by the insertion of a sulfur atom into dethiobiotin via a radical-based mechanism. The sequence is that of Biotin synthase from Nitrosopumilus maritimus (strain SCM1).